A 183-amino-acid chain; its full sequence is uncharacterized protein (183 aa).

This is an uncharacterized protein from Acanthamoeba polyphaga mimivirus (APMV).